A 278-amino-acid polypeptide reads, in one-letter code: MEENMEEGQTQKGCFECCIKCLGGIPYASLIATILLYAGVALFCGCGHEALSGTVTILQNNFEVVRGAGDTIDVFTMIDIFKYVIYGVAAAFFVYGILLMVEGFFTTGAIKDLYGDFKITTCGRCVSGWFIMLTYIFMLAWLGVTAFTSLPVFMYFNIWTLCQNVTIMESTDLCFDLRQFGIVPIHEQKTVCTLNENFSKLCQSNDLNMTFHLFIVALAGAGAAVIAMVHYLMVLSANWAYVKDACRMQKYEDIKSKEEQELHDIHSTRSKERLNAYT.

4 consecutive transmembrane segments (helical) span residues 30-46, 84-100, 130-146, and 213-229; these read LIAT…FCGC, VIYG…ILLM, FIML…GVTA, and LFIV…IAMV.

The protein belongs to the myelin proteolipid protein family.

The protein localises to the membrane. This is Proteolipid protein DM beta from Squalus acanthias (Spiny dogfish).